A 123-amino-acid chain; its full sequence is Basic myotoxic phospholipase A2 PhTX-II (123 aa).

Intrachain disulfides connect Cys26-Cys116, Cys28-Cys45, Cys44-Cys95, Cys50-Cys123, Cys51-Cys88, Cys58-Cys81, and Cys75-Cys86. Positions 27, 29, and 31 each coordinate Ca(2+). The active site involves His48. Asp49 serves as a coordination point for Ca(2+). Asp89 is a catalytic residue.

In terms of assembly, monomer. Ca(2+) is required as a cofactor. In terms of tissue distribution, expressed by the venom gland.

It localises to the secreted. The enzyme catalyses a 1,2-diacyl-sn-glycero-3-phosphocholine + H2O = a 1-acyl-sn-glycero-3-phosphocholine + a fatty acid + H(+). With respect to regulation, P-bromophenacyl bromide (BPB) completely inhibits the catalytic and edematogenic activities. Enzymatic activity is also diminished by EDTA, heparin and crotapotins F2 and F3 from C.d.collilineatus. Inhibited by divalent cations different from calcium ions (cadmium, magnesium, manganese, zinc), since they act as competitive antagonists of this cofactor. Snake venom phospholipase A2 (PLA2) that induces myotoxicity and local edema in mice. In addition, it causes neuromuscular blockade in avian neuromuscular preparations with a significant direct action on skeletal muscle function. Myotoxic action is exerted by both enzymatic and non-enzymatic mechanisms. PLA2 catalyzes the calcium-dependent hydrolysis of the 2-acyl groups in 3-sn-phosphoglycerides. This chain is Basic myotoxic phospholipase A2 PhTX-II, found in Bothrocophias hyoprora (Amazonian hognose viper).